Reading from the N-terminus, the 295-residue chain is ATP synthase gamma chain (295 aa).

Belongs to the ATPase gamma chain family. F-type ATPases have 2 components, CF(1) - the catalytic core - and CF(0) - the membrane proton channel. CF(1) has five subunits: alpha(3), beta(3), gamma(1), delta(1), epsilon(1). CF(0) has three main subunits: a, b and c.

Its subcellular location is the cell membrane. Functionally, produces ATP from ADP in the presence of a proton gradient across the membrane. The gamma chain is believed to be important in regulating ATPase activity and the flow of protons through the CF(0) complex. This is ATP synthase gamma chain from Caldanaerobacter subterraneus subsp. tengcongensis (strain DSM 15242 / JCM 11007 / NBRC 100824 / MB4) (Thermoanaerobacter tengcongensis).